A 208-amino-acid chain; its full sequence is Translation initiation factor IF-3 (208 aa).

It belongs to the IF-3 family. Monomer.

It localises to the cytoplasm. IF-3 binds to the 30S ribosomal subunit and shifts the equilibrium between 70S ribosomes and their 50S and 30S subunits in favor of the free subunits, thus enhancing the availability of 30S subunits on which protein synthesis initiation begins. The sequence is that of Translation initiation factor IF-3 from Parabacteroides distasonis (strain ATCC 8503 / DSM 20701 / CIP 104284 / JCM 5825 / NCTC 11152).